A 288-amino-acid chain; its full sequence is 4-hydroxybenzoate octaprenyltransferase (288 aa).

The next 8 helical transmembrane spans lie at Ile23–Ile43, Ala46–Val66, Ile98–Thr118, Leu141–Val161, Glu163–Tyr183, Leu213–Met233, Asn234–Gln254, and Ala268–Trp288.

The protein belongs to the UbiA prenyltransferase family. Mg(2+) is required as a cofactor.

It is found in the cell inner membrane. The catalysed reaction is all-trans-octaprenyl diphosphate + 4-hydroxybenzoate = 4-hydroxy-3-(all-trans-octaprenyl)benzoate + diphosphate. The protein operates within cofactor biosynthesis; ubiquinone biosynthesis. Its function is as follows. Catalyzes the prenylation of para-hydroxybenzoate (PHB) with an all-trans polyprenyl group. Mediates the second step in the final reaction sequence of ubiquinone-8 (UQ-8) biosynthesis, which is the condensation of the polyisoprenoid side chain with PHB, generating the first membrane-bound Q intermediate 3-octaprenyl-4-hydroxybenzoate. In Yersinia pestis bv. Antiqua (strain Antiqua), this protein is 4-hydroxybenzoate octaprenyltransferase.